We begin with the raw amino-acid sequence, 281 residues long: Probable ABC transporter ATP-binding protein AZC_3926 (281 aa).

Positions 1–38 (MNVLSMFGRNATRETSSPAATAGRYADEGDWEGDDHQP) are disordered. An ABC transporter domain is found at 45–277 (LAAFGLAKSY…PDVRRLYLGE (233 aa)). 77–84 (GPNGAGKT) is a binding site for ATP.

It belongs to the ABC transporter superfamily.

In Azorhizobium caulinodans (strain ATCC 43989 / DSM 5975 / JCM 20966 / LMG 6465 / NBRC 14845 / NCIMB 13405 / ORS 571), this protein is Probable ABC transporter ATP-binding protein AZC_3926.